Reading from the N-terminus, the 232-residue chain is Protein FAM246B (232 aa).

Over residues 19–31 (EVLRRVTGRRRDP) the composition is skewed to basic and acidic residues. Disordered regions lie at residues 19–47 (EVLR…RAPG), 80–101 (AAGA…VCGE), 151–179 (ALLP…GPTL), and 191–232 (AASR…GGGD). The segment covering 211 to 220 (APARKNHKKM) has biased composition (basic residues).

It belongs to the FAM246 family.

The sequence is that of Protein FAM246B from Homo sapiens (Human).